The chain runs to 199 residues: Recombination protein RecR (199 aa).

The C4-type zinc finger occupies 58-73 (CQRCNNFSEEAVCQRC). The 96-residue stretch at 81–176 (ATLCVVEMPA…KVSRISRGVP (96 aa)) folds into the Toprim domain.

Belongs to the RecR family.

Functionally, may play a role in DNA repair. It seems to be involved in an RecBC-independent recombinational process of DNA repair. It may act with RecF and RecO. The protein is Recombination protein RecR of Azoarcus sp. (strain BH72).